Consider the following 301-residue polypeptide: Lipoyl synthase (301 aa).

Residues Cys50, Cys55, Cys61, Cys76, Cys80, Cys83, and Ser289 each coordinate [4Fe-4S] cluster. Residues 62–278 (WNHRTATFLL…RRYALERGFR (217 aa)) form the Radical SAM core domain.

It belongs to the radical SAM superfamily. Lipoyl synthase family. [4Fe-4S] cluster is required as a cofactor.

It is found in the cytoplasm. The catalysed reaction is [[Fe-S] cluster scaffold protein carrying a second [4Fe-4S](2+) cluster] + N(6)-octanoyl-L-lysyl-[protein] + 2 oxidized [2Fe-2S]-[ferredoxin] + 2 S-adenosyl-L-methionine + 4 H(+) = [[Fe-S] cluster scaffold protein] + N(6)-[(R)-dihydrolipoyl]-L-lysyl-[protein] + 4 Fe(3+) + 2 hydrogen sulfide + 2 5'-deoxyadenosine + 2 L-methionine + 2 reduced [2Fe-2S]-[ferredoxin]. It participates in protein modification; protein lipoylation via endogenous pathway; protein N(6)-(lipoyl)lysine from octanoyl-[acyl-carrier-protein]: step 2/2. Catalyzes the radical-mediated insertion of two sulfur atoms into the C-6 and C-8 positions of the octanoyl moiety bound to the lipoyl domains of lipoate-dependent enzymes, thereby converting the octanoylated domains into lipoylated derivatives. The chain is Lipoyl synthase from Roseiflexus sp. (strain RS-1).